The sequence spans 143 residues: Large ribosomal subunit protein uL11 (143 aa).

It belongs to the universal ribosomal protein uL11 family. In terms of assembly, part of the ribosomal stalk of the 50S ribosomal subunit. Interacts with L10 and the large rRNA to form the base of the stalk. L10 forms an elongated spine to which L12 dimers bind in a sequential fashion forming a multimeric L10(L12)X complex. One or more lysine residues are methylated.

Functionally, forms part of the ribosomal stalk which helps the ribosome interact with GTP-bound translation factors. The polypeptide is Large ribosomal subunit protein uL11 (Azoarcus sp. (strain BH72)).